The following is a 556-amino-acid chain: Polypeptide N-acetylgalactosaminyltransferase 13 (556 aa).

Topologically, residues 1-4 (MRRF) are cytoplasmic. A helical; Signal-anchor for type II membrane protein membrane pass occupies residues 5 to 27 (VYCKVVLATSLMWVLVDVFLLLY). The Lumenal segment spans residues 28–556 (FSECNKCDDK…WLLRNMTLGT (529 aa)). N-linked (GlcNAc...) asparagine glycosylation is found at Asn94 and Asn116. 5 disulfide bridges follow: Cys105/Cys338, Cys329/Cys407, Cys441/Cys458, Cys481/Cys496, and Cys522/Cys539. A catalytic subdomain A region spans residues 114-224 (LPNTSVVIVF…LGWLEPLLAR (111 aa)). Substrate-binding residues include Asp155 and Arg185. Asp208 and His210 together coordinate Mn(2+). Residues 284–346 (PVRTPTMAGG…TCSHVGHVFR (63 aa)) form a catalytic subdomain B region. Trp315 lines the substrate pocket. His343 serves as a coordination point for Mn(2+). 2 residues coordinate substrate: Arg346 and Tyr351. The Ricin B-type lectin domain occupies 428–550 (YSLGEIRNVE…GSRSQQWLLR (123 aa)). N-linked (GlcNAc...) asparagine glycosylation occurs at Asn551.

It belongs to the glycosyltransferase 2 family. GalNAc-T subfamily. Mn(2+) serves as cofactor. Specifically expressed in neuronal cells. Expressed in fetal brain, whole adult brain, cerebral cortex and cerebellum. Not expressed in other tissues tested.

It is found in the golgi apparatus membrane. It catalyses the reaction L-seryl-[protein] + UDP-N-acetyl-alpha-D-galactosamine = a 3-O-[N-acetyl-alpha-D-galactosaminyl]-L-seryl-[protein] + UDP + H(+). It carries out the reaction L-threonyl-[protein] + UDP-N-acetyl-alpha-D-galactosamine = a 3-O-[N-acetyl-alpha-D-galactosaminyl]-L-threonyl-[protein] + UDP + H(+). The protein operates within protein modification; protein glycosylation. In terms of biological role, catalyzes the initial reaction in O-linked oligosaccharide biosynthesis, the transfer of an N-acetyl-D-galactosamine (GalNAc) residue from UDP-GalNAc to a serine or threonine residue on the protein receptor. Generates GalNAc-O-Ser/Thr structure also known as Tn antigen, which itself is immunogenic but also serves as a precursor for the synthesis of different mucin-type O-glycan core structures. Contributes to the synthesis of O-linked glycans on mucins and proteoglycans of the central nervous system. May promote neurogenesis through glycosylation and stabilization of PDPN. Functionally, can glycosylate both unmodified peptides and glycopeptides that already contain an O-linked GalNAc sugar. Transfers GalNAc to Thr-/Ser-rich tandem repeats GTTPSPVPTTSTTSAP of MUC5AC, specifically on Thr-3 of non-glycosylated MUC5AC peptide, on Thr-12 and Thr-13 of preglycosylated MUC5AC at Thr-3 (MUC5AC-3), on Thr-3 of preglycosylated MUC5AC at Thr-13 (MUC5AC-13) and on Thr-12 of preglycosylated MUC5AC at Thr-3 and Thr-13 (MUC5AC-3,13). Transfers GalNAc to three consecutive serine/threonine residues on SDC3 forming a triplet-Tn epitope expressed in Purkinje cells of the developing brain. Can glycosylate both unmodified peptides and glycopeptides that already contain an O-linked GalNAc sugar. Transfers GalNAc to Thr-/Ser-rich tandem repeats GTTPSPVPTTSTTSAP of MUC5AC, specifically on Thr-3 of non-glycosylated MUC5AC peptide, on Thr-12 and Thr-13 of preglycosylated MUC5AC at Thr-3 (MUC5AC-3), on Thr-3 of preglycosylated MUC5AC at Thr-13 (MUC5AC-13) and on Thr-12 of preglycosylated MUC5AC at Thr-3 and Thr-13 (MUC5AC-3,13). The protein is Polypeptide N-acetylgalactosaminyltransferase 13 (GALNT13) of Homo sapiens (Human).